We begin with the raw amino-acid sequence, 185 residues long: Ribosome-recycling factor (185 aa).

This sequence belongs to the RRF family.

Its subcellular location is the cytoplasm. Its function is as follows. Responsible for the release of ribosomes from messenger RNA at the termination of protein biosynthesis. May increase the efficiency of translation by recycling ribosomes from one round of translation to another. In Bacillus cereus (strain G9842), this protein is Ribosome-recycling factor.